The sequence spans 495 residues: Tripartite motif-containing protein 5 (495 aa).

The residue at position 2 (A2) is an N-acetylalanine. An RING-type zinc finger spans residues 15–60; the sequence is CPICLELLTEPLSLHCGHSFCQACITANHKKSMLYKEGERSCPVCR. Residue S87 is modified to Phosphoserine. The B box-type zinc finger occupies 92-133; it reads QKVDHCARHGEKLLLFCQEDSKVICWLCERSQEHRGHHTFLM. C97, H100, C119, and H125 together coordinate Zn(2+). A coiled-coil region spans residues 137-223; it reads AQEYHVKLQT…KSLTKSETKM (87 aa). Residues 187–200 are required for interaction with GABARAP and for autophagy; the sequence is FEQLREILDREESN. In terms of domain architecture, B30.2/SPRY spans 283–495; that stretch reads LKGMLDMFRE…VPMTLCSPSS (213 aa).

It belongs to the TRIM/RBCC family. As to quaternary structure, can form homodimers and homotrimers. In addition to lower-order dimerization, also exhibits a higher-order multimerization and both low- and high-order multimerizations are essential for its restriction activity. Interacts with BTBD1 and BTBD2. Interacts with PSMC4, PSMC5, PSMD7 and HSPA8/HSC70. Interacts (via B30.2/SPRY domain) with HSPA1A/B. Interacts with PSMC2, MAP3K7/TAK1, TAB2 and TAB3. Interacts with SQSTM1. Interacts with TRIM6 and TRIM34. Interacts with ULK1 (phosphorylated form), GABARAP, GABARAPL1, GABARAPL2, MAP1LC3A, MAP1LC3C and BECN1. Degraded in a proteasome-independent fashion in the absence of viral infection but in a proteasome-dependent fashion following exposure to restriction sensitive virus. Post-translationally, autoubiquitinated in a RING finger- and UBE2D2-dependent manner. Monoubiquitinated by TRIM21. Deubiquitinated by Yersinia YopJ. Ubiquitination may not lead to proteasomal degradation.

The protein resides in the cytoplasm. It localises to the nucleus. The catalysed reaction is S-ubiquitinyl-[E2 ubiquitin-conjugating enzyme]-L-cysteine + [acceptor protein]-L-lysine = [E2 ubiquitin-conjugating enzyme]-L-cysteine + N(6)-ubiquitinyl-[acceptor protein]-L-lysine.. It functions in the pathway protein modification; protein ubiquitination. Its function is as follows. Capsid-specific restriction factor that prevents infection from non-host-adapted retroviruses. Blocks viral replication early in the life cycle, after viral entry but before reverse transcription. In addition to acting as a capsid-specific restriction factor, also acts as a pattern recognition receptor that activates innate immune signaling in response to the retroviral capsid lattice. Binding to the viral capsid triggers its E3 ubiquitin ligase activity, and in concert with the heterodimeric ubiquitin conjugating enzyme complex UBE2V1-UBE2N (also known as UBC13-UEV1A complex) generates 'Lys-63'-linked polyubiquitin chains, which in turn are catalysts in the autophosphorylation of the MAP3K7/TAK1 complex (includes TAK1, TAB2, and TAB3). Activation of the MAP3K7/TAK1 complex by autophosphorylation results in the induction and expression of NF-kappa-B and MAPK-responsive inflammatory genes, thereby leading to an innate immune response in the infected cell. Plays a role in regulating autophagy through activation of autophagy regulator BECN1 by causing its dissociation from its inhibitors BCL2 and TAB2. This Macaca nemestrina (Pig-tailed macaque) protein is Tripartite motif-containing protein 5 (TRIM5).